Here is a 199-residue protein sequence, read N- to C-terminus: Holliday junction branch migration complex subunit RuvA (199 aa).

Positions 1 to 64 are domain I; that stretch reads MIGRLRGILL…DDAHLLYAFA (64 aa). Residues 65–143 form a domain II region; sequence SEKERGLFRS…DMPESGVAGM (79 aa). Residues 144–150 form a flexible linker region; that stretch reads RPDRVDG. The domain III stretch occupies residues 151-199; sequence SAPGTVAEAVSALVALGYKPNEASRAVRRLDTEALTTEEIIRQALQRML.

This sequence belongs to the RuvA family. In terms of assembly, homotetramer. Forms an RuvA(8)-RuvB(12)-Holliday junction (HJ) complex. HJ DNA is sandwiched between 2 RuvA tetramers; dsDNA enters through RuvA and exits via RuvB. An RuvB hexamer assembles on each DNA strand where it exits the tetramer. Each RuvB hexamer is contacted by two RuvA subunits (via domain III) on 2 adjacent RuvB subunits; this complex drives branch migration. In the full resolvosome a probable DNA-RuvA(4)-RuvB(12)-RuvC(2) complex forms which resolves the HJ.

It localises to the cytoplasm. Its function is as follows. The RuvA-RuvB-RuvC complex processes Holliday junction (HJ) DNA during genetic recombination and DNA repair, while the RuvA-RuvB complex plays an important role in the rescue of blocked DNA replication forks via replication fork reversal (RFR). RuvA specifically binds to HJ cruciform DNA, conferring on it an open structure. The RuvB hexamer acts as an ATP-dependent pump, pulling dsDNA into and through the RuvAB complex. HJ branch migration allows RuvC to scan DNA until it finds its consensus sequence, where it cleaves and resolves the cruciform DNA. The protein is Holliday junction branch migration complex subunit RuvA of Nitrosococcus oceani (strain ATCC 19707 / BCRC 17464 / JCM 30415 / NCIMB 11848 / C-107).